We begin with the raw amino-acid sequence, 579 residues long: Glycine--tRNA ligase (579 aa).

Glutamate 175 contacts glycine. ATP is bound by residues arginine 207–glutamate 209 and arginine 218–valine 219. Position 226 (glutamate 226) interacts with glycine. Glutamate 327 to cysteine 328 contacts ATP. Position 442–444 (glutamate 442–serine 444) interacts with glycine. Arginine 449 serves as a coordination point for ATP.

It belongs to the class-II aminoacyl-tRNA synthetase family. Homodimer.

The enzyme catalyses tRNA(Gly) + glycine + ATP = glycyl-tRNA(Gly) + AMP + diphosphate. The catalysed reaction is 2 ATP + H(+) = P(1),P(4)-bis(5'-adenosyl) tetraphosphate + diphosphate. Catalyzes the ATP-dependent ligation of glycine to the 3'-end of its cognate tRNA, via the formation of an aminoacyl-adenylate intermediate (Gly-AMP). Also produces diadenosine tetraphosphate (Ap4A), a universal pleiotropic signaling molecule needed for cell regulation pathways, by direct condensation of 2 ATPs. Thereby, may play a special role in Ap4A homeostasis. The protein is Glycine--tRNA ligase of Encephalitozoon cuniculi (strain GB-M1) (Microsporidian parasite).